A 293-amino-acid polypeptide reads, in one-letter code: Aspartate carbamoyltransferase catalytic subunit (293 aa).

Positions 50 and 51 each coordinate carbamoyl phosphate. Lysine 78 lines the L-aspartate pocket. Residues arginine 100, histidine 127, and glutamine 130 each coordinate carbamoyl phosphate. 2 residues coordinate L-aspartate: arginine 160 and arginine 210. Residues alanine 253 and proline 254 each contribute to the carbamoyl phosphate site.

This sequence belongs to the aspartate/ornithine carbamoyltransferase superfamily. ATCase family. Heterododecamer (2C3:3R2) of six catalytic PyrB chains organized as two trimers (C3), and six regulatory PyrI chains organized as three dimers (R2).

It catalyses the reaction carbamoyl phosphate + L-aspartate = N-carbamoyl-L-aspartate + phosphate + H(+). Its pathway is pyrimidine metabolism; UMP biosynthesis via de novo pathway; (S)-dihydroorotate from bicarbonate: step 2/3. In terms of biological role, catalyzes the condensation of carbamoyl phosphate and aspartate to form carbamoyl aspartate and inorganic phosphate, the committed step in the de novo pyrimidine nucleotide biosynthesis pathway. The chain is Aspartate carbamoyltransferase catalytic subunit from Staphylococcus epidermidis (strain ATCC 35984 / DSM 28319 / BCRC 17069 / CCUG 31568 / BM 3577 / RP62A).